The primary structure comprises 649 residues: Phospholipase A1 PLIP1, chloroplastic (649 aa).

A chloroplast-targeting transit peptide spans 1–67 (MAFNTAMAST…NNRILAVSVR (67 aa)). The GXSXG motif lies at 420–424 (GHSLG). S422 functions as the Acyl-ester intermediate in the catalytic mechanism. Catalysis depends on charge relay system residues D483 and H593.

This sequence belongs to the AB hydrolase superfamily. Lipase family.

It is found in the plastid. Its subcellular location is the chloroplast thylakoid membrane. It catalyses the reaction a 1,2-diacyl-sn-glycero-3-phosphocholine + H2O = a 2-acyl-sn-glycero-3-phosphocholine + a fatty acid + H(+). The enzyme catalyses a 1,2-diacyl-3-O-(beta-D-galactosyl)-sn-glycerol + 2 H2O = 3-beta-D-galactosyl-sn-glycerol + 2 a fatty acid + 2 H(+). Its function is as follows. Sn-1-specific phospholipase A1 involved in seed oil biosynthesis. Hydrolyzes polyunsaturated acyl groups from a unique chloroplast-specific phosphatidylglycerol (PG) that contains 16:1 delta 3-trans as its second acyl group. The polyunsaturated acyl groups released by PLIP1 are exported from the chloroplast, reincorporated into phosphatidylcholine (PC), and ultimately enter seed triacylglycerol (TAG). In vitro, possesses broad substrate specificity. Can hydrolyze the galactolipid monogalactosyldiacylglycerol (MGDG), and the phoshpolipids phosphatidylcholine (PC), phosphatidylethanolamine (PE), phosphatidic acid (PA), phosphatidylserine (PS) phosphatidylglycerol (PG) and phosphatidylinositol (PI). The chain is Phospholipase A1 PLIP1, chloroplastic from Arabidopsis thaliana (Mouse-ear cress).